Here is a 445-residue protein sequence, read N- to C-terminus: StAR-related lipid transfer protein 3 (445 aa).

Topologically, residues 1–51 (MSKLPRELTRDLERSLPAVASLGSSLSHSQSLSSHLLPPPEKRRAISDVRR) are cytoplasmic. One can recognise an MENTAL domain in the interval 46–217 (ISDVRRTFCL…YSPPESFAGS (172 aa)). The helical transmembrane segment at 52–72 (TFCLFVTFDLLFISLLWIIEL) threads the bilayer. The Extracellular segment spans residues 73 to 94 (NTNTGIRKNLEQEIIQYNFKTS). Residues 95–115 (FFDIFVLAFFRFSGLLLGYAV) traverse the membrane as a helical segment. The Cytoplasmic portion of the chain corresponds to 116–120 (LRLRH). Residues 121–141 (WWVIAVTTLVSSAFLIVKVIL) form a helical membrane-spanning segment. Over 142-148 (SELLSKG) the chain is Extracellular. The helical transmembrane segment at 149 to 169 (AFGYLLPIVSFVLAWLETWFL) threads the bilayer. Topologically, residues 170–445 (DFKVLPQEAE…QRISELGARA (276 aa)) are cytoplasmic. The FFAT motif lies at 206-212 (QFYSPPE). Serine 209 carries the phosphoserine modification. One can recognise an START domain in the interval 230–443 (SFSAQEREYI…LRQRISELGA (214 aa)).

It belongs to the STARD3 family. In terms of assembly, homodimer. Interacts (via the MENTAL domain) with STARD3NL. Interacts (via phosphorylated FFAT motif) with VAPA (via MSP domain). Interacts (via phosphorylated FFAT motif) with VAPB (via MSP domain). Interacts (via phosphorylated FFAT motif) with MOSPD2 (via MSP domain); this interaction allows enrichment of MOSPD2 around endosomes. In terms of processing, phosphorylation at Ser-209 is necessary and sufficient for the direct interaction of the phosphorylated FFAT motif with the MSP domain of MOSPD2, VAPA and VAPB and allows the tethering of two membranes that participates in the formation of ER-endosome contacts. Phosphorylation of the FFAT motif leads to conformation changes. Additional phosphorylations around the core FFAT motif (QFYSPPE) are not essential but strengthen the interaction with MOSPD2, VAPA and VAPB. Phosphorylation at Ser-209 of FFAT motif drives membrane tethering between the endoplasmic reticulum and late endosomes via interaction with VAPA and VAPB that in turn allows the efficient transport of sterol mediated by the START domain. Expressed in retina.

It is found in the late endosome membrane. It catalyses the reaction cholesterol(in) = cholesterol(out). Sterol-binding protein that mediates cholesterol transport from the endoplasmic reticulum to endosomes. The sterol transport mechanism is triggered by phosphorylation of FFAT motif that leads to membrane tethering between the endoplasmic reticulum and late endosomes via interaction with VAPA and VAPB. Acts as a lipid transfer protein that redirects sterol to the endosome at the expense of the cell membrane and favors membrane formation inside endosomes. May also mediate cholesterol transport between other membranes, such as mitochondria membrane or cell membrane. However, such results need additional experimental evidences; probably mainly mediates cholesterol transport from the endoplasmic reticulum to endosomes. Does not activate transcriptional cholesterol sensing. Able to bind other lipids, such as lutein, a xanthophyll carotenoids that form the macular pigment of the retina. In Homo sapiens (Human), this protein is StAR-related lipid transfer protein 3.